A 504-amino-acid chain; its full sequence is WD repeat-containing protein 55 homolog (504 aa).

Disordered stretches follow at residues 1–21 (MDRH…DIDD) and 33–132 (QEVL…DDDD). 2 stretches are compositionally biased toward acidic residues: residues 12–21 (NEDELDDIDD) and 33–48 (QEVL…EYDL). Positions 63–74 (SSSNESISSDGS) are enriched in low complexity. Positions 78–89 (NAEDSDSDDSMI) are enriched in acidic residues. 6 WD repeats span residues 156–195 (KLED…NKLL), 200–239 (VHAK…LKKL), 243–281 (AHDD…AIFE), 284–323 (EVED…LYVQ), 326–365 (PYEE…YHCD), and 410–449 (QHNM…DFGD). Positions 477-504 (FFADMTKDQDDDDNDGGNDTAAGPSNVT) are disordered.

The protein belongs to the WD repeat WDR55 family.

In Drosophila virilis (Fruit fly), this protein is WD repeat-containing protein 55 homolog.